The primary structure comprises 103 residues: Small ribosomal subunit protein uS14c (103 aa).

It belongs to the universal ribosomal protein uS14 family. Part of the 30S ribosomal subunit.

The protein localises to the plastid. It localises to the chloroplast. Functionally, binds 16S rRNA, required for the assembly of 30S particles. This Lolium perenne (Perennial ryegrass) protein is Small ribosomal subunit protein uS14c.